The primary structure comprises 228 residues: Putative L-ribulose-5-phosphate 4-epimerase UlaF (228 aa).

Substrate contacts are provided by residues 26 to 27 (GN), 43 to 44 (SG), and 72 to 73 (SS). Positions 74, 93, and 95 each coordinate Zn(2+). The Proton donor/acceptor role is filled by Asp118. A Zn(2+)-binding site is contributed by His167. Tyr225 functions as the Proton donor/acceptor in the catalytic mechanism.

Belongs to the aldolase class II family. AraD/FucA subfamily. Requires Zn(2+) as cofactor.

It catalyses the reaction L-ribulose 5-phosphate = D-xylulose 5-phosphate. It functions in the pathway cofactor degradation; L-ascorbate degradation; D-xylulose 5-phosphate from L-ascorbate: step 4/4. Catalyzes the isomerization of L-ribulose 5-phosphate to D-xylulose 5-phosphate. Is involved in the anaerobic L-ascorbate utilization. The sequence is that of Putative L-ribulose-5-phosphate 4-epimerase UlaF from Shigella boydii serotype 4 (strain Sb227).